The following is a 695-amino-acid chain: Glycine--tRNA ligase beta subunit (695 aa).

This sequence belongs to the class-II aminoacyl-tRNA synthetase family. In terms of assembly, tetramer of two alpha and two beta subunits.

The protein resides in the cytoplasm. It catalyses the reaction tRNA(Gly) + glycine + ATP = glycyl-tRNA(Gly) + AMP + diphosphate. This chain is Glycine--tRNA ligase beta subunit, found in Lawsonia intracellularis (strain PHE/MN1-00).